Here is a 147-residue protein sequence, read N- to C-terminus: MSIRLENLSYTPGARKEKHRKGRGHAAGKGKQAGRGQSGQKKRSTVRLGFEGGQNPWFRRVPKRGFRNFNKKEYEIFNLSDLESRYQDGDTVSLESLYLKKVLKKRNLKAKLLANGDLTKKLTVTTNAFSIAAQKKIEEKGGKIEVR.

Positions 1 to 46 (MSIRLENLSYTPGARKEKHRKGRGHAAGKGKQAGRGQSGQKKRSTV) are disordered. Positions 16–28 (KEKHRKGRGHAAG) are enriched in basic residues.

Belongs to the universal ribosomal protein uL15 family. In terms of assembly, part of the 50S ribosomal subunit.

Binds to the 23S rRNA. This Mesomycoplasma hyopneumoniae (strain 232) (Mycoplasma hyopneumoniae) protein is Large ribosomal subunit protein uL15.